We begin with the raw amino-acid sequence, 43 residues long: uncharacterized protein (43 aa).

The first 22 residues, 1 to 22 (MKRKIIAIGIFFRLFIIHIHFS), serve as a signal peptide directing secretion.

This is an uncharacterized protein from Schizosaccharomyces pombe (strain 972 / ATCC 24843) (Fission yeast).